A 160-amino-acid polypeptide reads, in one-letter code: Cytochrome b6-f complex subunit 4 (160 aa).

Helical transmembrane passes span 36-56 (LLYV…GLAI), 95-115 (LLGV…PFIE), and 131-151 (TVFL…TMPI).

Belongs to the cytochrome b family. PetD subfamily. In terms of assembly, the 4 large subunits of the cytochrome b6-f complex are cytochrome b6, subunit IV (17 kDa polypeptide, petD), cytochrome f and the Rieske protein, while the 4 small subunits are petG, petL, petM and petN. The complex functions as a dimer.

The protein resides in the plastid. It is found in the chloroplast thylakoid membrane. Component of the cytochrome b6-f complex, which mediates electron transfer between photosystem II (PSII) and photosystem I (PSI), cyclic electron flow around PSI, and state transitions. The polypeptide is Cytochrome b6-f complex subunit 4 (Pyropia yezoensis (Susabi-nori)).